The following is a 533-amino-acid chain: SH3 and F-BAR domain-containing protein DDB_G0271676 (533 aa).

One can recognise an F-BAR domain in the interval 5 to 258 (RQFSEDLWDK…GIESIDRERD (254 aa)). A coiled-coil region spans residues 76 to 186 (REQLELIGAL…ADKGDNEYRE (111 aa)). Composition is skewed to basic and acidic residues over residues 126–155 (LKTA…EDLS) and 162–184 (KEQK…DNEY). Disordered regions lie at residues 126–184 (LKTA…DNEY) and 301–405 (SRKS…INSN). 4 stretches are compositionally biased toward low complexity: residues 318–327 (SIISSPQQPQ), 340–360 (NIII…NNSN), 372–385 (PQQQ…QLNN), and 392–405 (SLSK…INSN). 2 SH3 domains span residues 406-468 (SNGE…DSSD) and 476-533 (VAGR…VQVI).

The protein is SH3 and F-BAR domain-containing protein DDB_G0271676 of Dictyostelium discoideum (Social amoeba).